A 141-amino-acid chain; its full sequence is uncharacterized protein (141 aa).

A helical transmembrane segment spans residues 114–134 (ILFTCYIQSFSLLISNFFIAI).

It localises to the membrane. This is an uncharacterized protein from Schizosaccharomyces pombe (strain 972 / ATCC 24843) (Fission yeast).